Consider the following 532-residue polypeptide: Neutral amino acid transporter A (532 aa).

Residue Met-1 is modified to N-acetylmethionine. The segment covering 1 to 10 (MEKSNETNGY) has biased composition (polar residues). Residues 1–25 (MEKSNETNGYLDSAQAGPAAGPGAP) are disordered. Over 1–41 (MEKSNETNGYLDSAQAGPAAGPGAPGTAAGRARRCAGFLRR) the chain is Cytoplasmic. Low complexity predominate over residues 14–25 (AQAGPAAGPGAP). The next 3 helical transmembrane spans lie at 42 to 62 (QALV…GAAL), 88 to 108 (MIIL…LDAS), and 119 to 139 (AYFG…AFII). Residues 140-216 (KPGSGAQTLQ…VTHEKIPIGT (77 aa)) are Extracellular-facing. N-linked (GlcNAc...) asparagine glycans are attached at residues Asn-201 and Asn-206. Helical transmembrane passes span 217–237 (EIEG…GVAL), 257–277 (ATMV…MFLV), 298–318 (IFAS…LIYF), 328–348 (FLLG…SSAT), 373–393 (IGAT…AVFI), and 418–438 (VGAA…LEAI). The segment at 500 to 532 (CKSEEETSPLVTHQNPAGPVASAPELESKESVL) is disordered. 3 positions are modified to phosphoserine: Ser-507, Ser-527, and Ser-530.

The protein belongs to the dicarboxylate/amino acid:cation symporter (DAACS) (TC 2.A.23) family. SLC1A4 subfamily. As to expression, expressed mostly in brain, muscle, and pancreas but detected in all tissues examined.

It localises to the membrane. Its subcellular location is the melanosome. The enzyme catalyses L-threonine(in) + Na(+)(in) = L-threonine(out) + Na(+)(out). It catalyses the reaction L-serine(in) + Na(+)(in) = L-serine(out) + Na(+)(out). It carries out the reaction L-cysteine(in) + Na(+)(in) = L-cysteine(out) + Na(+)(out). The catalysed reaction is L-alanine(in) + Na(+)(in) = L-alanine(out) + Na(+)(out). The enzyme catalyses L-proline(in) + Na(+)(in) = L-proline(out) + Na(+)(out). It catalyses the reaction 4-hydroxy-L-proline(in) + Na(+)(in) = 4-hydroxy-L-proline(out) + Na(+)(out). In terms of biological role, sodium-dependent neutral amino-acid transporter that mediates transport of alanine, serine, cysteine, proline, hydroxyproline and threonine. The protein is Neutral amino acid transporter A of Homo sapiens (Human).